The sequence spans 382 residues: Queuine tRNA-ribosyltransferase (382 aa).

The Proton acceptor role is filled by Asp-93. Residues 93–97 (DSGGF), Asp-147, Gln-191, and Gly-218 each bind substrate. An RNA binding region spans residues 249–255 (GVGKPED). Catalysis depends on Asp-268, which acts as the Nucleophile. An RNA binding; important for wobble base 34 recognition region spans residues 273–277 (TRNAR). Zn(2+)-binding residues include Cys-306, Cys-308, Cys-311, and His-337.

This sequence belongs to the queuine tRNA-ribosyltransferase family. In terms of assembly, homodimer. Within each dimer, one monomer is responsible for RNA recognition and catalysis, while the other monomer binds to the replacement base PreQ1. The cofactor is Zn(2+).

It carries out the reaction 7-aminomethyl-7-carbaguanine + guanosine(34) in tRNA = 7-aminomethyl-7-carbaguanosine(34) in tRNA + guanine. The protein operates within tRNA modification; tRNA-queuosine biosynthesis. Its function is as follows. Catalyzes the base-exchange of a guanine (G) residue with the queuine precursor 7-aminomethyl-7-deazaguanine (PreQ1) at position 34 (anticodon wobble position) in tRNAs with GU(N) anticodons (tRNA-Asp, -Asn, -His and -Tyr). Catalysis occurs through a double-displacement mechanism. The nucleophile active site attacks the C1' of nucleotide 34 to detach the guanine base from the RNA, forming a covalent enzyme-RNA intermediate. The proton acceptor active site deprotonates the incoming PreQ1, allowing a nucleophilic attack on the C1' of the ribose to form the product. After dissociation, two additional enzymatic reactions on the tRNA convert PreQ1 to queuine (Q), resulting in the hypermodified nucleoside queuosine (7-(((4,5-cis-dihydroxy-2-cyclopenten-1-yl)amino)methyl)-7-deazaguanosine). This is Queuine tRNA-ribosyltransferase from Haemophilus influenzae (strain ATCC 51907 / DSM 11121 / KW20 / Rd).